The sequence spans 648 residues: Replication restart protein PriA (648 aa).

A Helicase ATP-binding domain is found at 131–297; the sequence is TIFNESNKPT…KTHKYQLVTL (167 aa). 144–151 contacts ATP; that stretch reads GVTGSGKT. A DEAH box motif is present at residues 240–243; the sequence is DEEH. Residues Cys358, Cys361, Cys367, Cys370, Cys385, Cys388, Cys398, and Cys401 each contribute to the Zn(2+) site. In terms of domain architecture, Helicase C-terminal spans 393 to 548; sequence KIFSSCPECL…SFFTNELEIR (156 aa).

This sequence belongs to the helicase family. PriA subfamily. Component of the replication restart primosome. Requires Zn(2+) as cofactor.

The catalysed reaction is Couples ATP hydrolysis with the unwinding of duplex DNA by translocating in the 3'-5' direction.. It carries out the reaction ATP + H2O = ADP + phosphate + H(+). In terms of biological role, initiates the restart of stalled replication forks, which reloads the replicative helicase on sites other than the origin of replication. Recognizes and binds to abandoned replication forks and remodels them to uncover a helicase loading site. Promotes assembly of the primosome at these replication forks. The chain is Replication restart protein PriA from Rickettsia typhi (strain ATCC VR-144 / Wilmington).